A 307-amino-acid polypeptide reads, in one-letter code: tRNA dimethylallyltransferase (307 aa).

ATP is bound at residue 7-14 (GPTAGGKT). Substrate is bound at residue 9–14 (TAGGKT). The interval 32–35 (DSRQ) is interaction with substrate tRNA.

This sequence belongs to the IPP transferase family. Monomer. It depends on Mg(2+) as a cofactor.

It carries out the reaction adenosine(37) in tRNA + dimethylallyl diphosphate = N(6)-dimethylallyladenosine(37) in tRNA + diphosphate. Catalyzes the transfer of a dimethylallyl group onto the adenine at position 37 in tRNAs that read codons beginning with uridine, leading to the formation of N6-(dimethylallyl)adenosine (i(6)A). In Elusimicrobium minutum (strain Pei191), this protein is tRNA dimethylallyltransferase.